A 141-amino-acid chain; its full sequence is Cystatin (141 aa).

An N-terminal signal peptide occupies residues 1–26 (MVHSQLPVAAPLRLLCALLLLPSATM). The Cystatin domain maps to 29–129 (GGLSPRSVTD…CHFQVWSRPW (101 aa)). A Secondary area of contact motif is present at residues 73-77 (QVVAG). 2 disulfide bridges follow: Cys-91/Cys-107 and Cys-120/Cys-140.

This sequence belongs to the cystatin family. In terms of tissue distribution, expressed at a low level by the venom gland (at protein level).

It localises to the secreted. Its function is as follows. Inhibits various C1 cysteine proteases including cathepsin L, papain and cathepsin B. This protein has no toxic activity and its function in the venom is unknown. It may play a role as a housekeeping or regulatory protein. The chain is Cystatin from Oxyuranus scutellatus scutellatus (Australian taipan).